We begin with the raw amino-acid sequence, 291 residues long: 6-deoxy-6-sulfogluconolactonase (291 aa).

A divalent metal cation-binding residues include E17, N148, and D198. D198 functions as the Proton donor/acceptor in the catalytic mechanism.

The protein belongs to the SMP-30/CGR1 family. A divalent metal cation serves as cofactor.

It catalyses the reaction 6-deoxy-6-sulfo-D-glucono-1,5-lactone + H2O = 6-deoxy-6-sulfo-D-gluconate + H(+). Catalyzes the hydrolysis of 6-deoxy-6-sulfo-D-glucono-1,5-lactone to form 6-deoxy-6-sulfo-D-gluconate. Is involved in a degradation pathway of sulfoquinovose (SQ) that allows P.putida SQ1 to use SQ as the sole carbon and energy source for growth. This is 6-deoxy-6-sulfogluconolactonase from Pseudomonas putida (Arthrobacter siderocapsulatus).